A 62-amino-acid chain; its full sequence is uncharacterized protein (62 aa).

It belongs to the asfivirus C62L family.

This is an uncharacterized protein from African swine fever virus (strain Badajoz 1971 Vero-adapted) (Ba71V).